The chain runs to 286 residues: MEETAEKTPVEAYSTLKPKGLMKMKKTALVAFIAGAALLLFGGVGAFYLWKVTEKEAISAHLGRNIDIKIENDSDSAEGTIVEVQDFKAGITAVKFPGKEKCFIKSQARTELSEDEAGVKAEVASLVWITSEEPLKDSSFLSPEILRFCADLPIYWHHPANSRALRKRRSATRMRRQTSAGVNRQPARRRNSTASARDERPTGPEYNPENPYHQNQGSEGTMVFDPMLDHRGICCTECHRSYTHCERVCEPLGGYWPWPYNYHGCRPVCRLIMPCRWWAARVLGLV.

A helical membrane pass occupies residues 29–49; it reads LVAFIAGAALLLFGGVGAFYL. The region spanning 75-157 is the BRICHOS domain; it reads DSAEGTIVEV…FCADLPIYWH (83 aa). Cysteine 102 and cysteine 149 are joined by a disulfide. Residues 166–169 constitute a propeptide that is removed on maturation; that stretch reads RKRR. Basic residues predominate over residues 166–176; sequence RKRRSATRMRR. The segment at 166–220 is disordered; it reads RKRRSATRMRRQTSAGVNRQPARRRNSTASARDERPTGPEYNPENPYHQNQGSEG. Residue asparagine 191 is glycosylated (N-linked (GlcNAc...) asparagine). 4 cysteine pairs are disulfide-bonded: cysteine 234–cysteine 238, cysteine 235–cysteine 275, cysteine 245–cysteine 269, and cysteine 249–cysteine 265.

Belongs to the chondromodulin-1 family. In terms of processing, after cleavage, the post-translationally modified ChM-I is secreted as a glycoprotein.

It localises to the secreted. The protein resides in the extracellular space. It is found in the extracellular matrix. Its subcellular location is the endomembrane system. In terms of biological role, bifunctional growth regulator. May contribute to the rapid growth of cartilage and vascular invasion prior to the replacement of cartilage by bone during endochondral bone development. Plays a role as antiangiogenic factor in cardiac valves to suppress neovascularization. This Danio rerio (Zebrafish) protein is Leukocyte cell-derived chemotaxin 1.